The sequence spans 823 residues: Kinesin-like protein KIN-7N (823 aa).

Residues 3–325 form the Kinesin motor domain; the sequence is KICVAVRVRP…LQFASRAKRI (323 aa). 83–90 is a binding site for ATP; it reads GQTSSGKT. Coiled-coil stretches lie at residues 341-414, 527-557, and 696-786; these read LKRQ…NLNN, RENHSEVEDLKSRIQLLTNENDSLQVKFNEQ, and EKKL…MEEE.

It belongs to the TRAFAC class myosin-kinesin ATPase superfamily. Kinesin family. KIN-7 subfamily.

This is Kinesin-like protein KIN-7N from Arabidopsis thaliana (Mouse-ear cress).